The sequence spans 810 residues: Lon protease (810 aa).

The 194-residue stretch at 16-209 folds into the Lon N-terminal domain; the sequence is YPVPPLRDIV…RVYAFMEGEI (194 aa). Residue 361–368 participates in ATP binding; that stretch reads GPPGVGKT. The region spanning 598-779 is the Lon proteolytic domain; the sequence is EDLVGVTTGL…DDVLKHALVR (182 aa). Active-site residues include S685 and K728.

The protein belongs to the peptidase S16 family. As to quaternary structure, homohexamer. Organized in a ring with a central cavity.

The protein localises to the cytoplasm. It carries out the reaction Hydrolysis of proteins in presence of ATP.. Functionally, ATP-dependent serine protease that mediates the selective degradation of mutant and abnormal proteins as well as certain short-lived regulatory proteins. Required for cellular homeostasis and for survival from DNA damage and developmental changes induced by stress. Degrades polypeptides processively to yield small peptide fragments that are 5 to 10 amino acids long. Binds to DNA in a double-stranded, site-specific manner. Involved in iron uptake. In Azospirillum brasilense, this protein is Lon protease.